The sequence spans 378 residues: 3,6-diketocamphane 1,6-monooxygenase (378 aa).

Residues His10, Ser44, Met76, and 201-209 (TGFSYNSPS) contribute to the FMN site.

This sequence belongs to the bacterial luciferase oxidoreductase family. In terms of assembly, homodimer. Likely forms a loose transient complex with a P.putida flavin reductase that provides the required FMNH(2) to the enzyme.

The enzyme catalyses (1S,4S)-bornane-2,5-dione + FMNH2 + O2 = (1S,4S)-5-oxo-1,2-campholide + FMN + H2O + H(+). In terms of biological role, involved in the degradation and assimilation of (-)-camphor, which allows P.putida strain NCIMB 10007 to grow on this enantiomer of camphor as the sole carbon source. Catalyzes the FMNH(2)-dependent lactonization of 3,6-diketocamphane via a Baeyer-Villiger oxidation to produce the unstable lactone 5-oxo-1,2-campholide with (S,S) configuration, that presumably undergoes spontaneous hydrolysis to form 2-oxo-Delta(3)-4,5,5-trimethylcyclopentenylacetate. Is also able to convert (-)-camphor to the corresponding lactone in vitro. Shows no conversion of (+)-camphor, (+)-fenchone, (-)-fenchone, and (+)-nopinone. Acts on other bicyclic ketones but very poorly on a few 2- and 4-substituted monocyclic ketones. The sequence is that of 3,6-diketocamphane 1,6-monooxygenase from Pseudomonas putida (Arthrobacter siderocapsulatus).